The chain runs to 643 residues: Threonine--tRNA ligase (643 aa).

The 61-residue stretch at 1 to 61 folds into the TGS domain; that stretch reads MIEIFIEDLN…NQSGNLKFLK (61 aa). The segment at 246 to 539 is catalytic; it reads DHRKIGKDLE…LLEHYAGFLP (294 aa). Residues Cys-339, His-390, and His-516 each contribute to the Zn(2+) site.

The protein belongs to the class-II aminoacyl-tRNA synthetase family. Homodimer. Zn(2+) is required as a cofactor.

Its subcellular location is the cytoplasm. The catalysed reaction is tRNA(Thr) + L-threonine + ATP = L-threonyl-tRNA(Thr) + AMP + diphosphate + H(+). Its function is as follows. Catalyzes the attachment of threonine to tRNA(Thr) in a two-step reaction: L-threonine is first activated by ATP to form Thr-AMP and then transferred to the acceptor end of tRNA(Thr). Also edits incorrectly charged L-seryl-tRNA(Thr). This is Threonine--tRNA ligase from Sulfurihydrogenibium sp. (strain YO3AOP1).